A 632-amino-acid polypeptide reads, in one-letter code: tRNA uridine 5-carboxymethylaminomethyl modification enzyme MnmG (632 aa).

FAD contacts are provided by residues 16-21 (GAGHAG), Val128, and Ser183. Positions 206 to 225 (PRVNGNTIDYSKTEEEPGDK) are disordered. The span at 216–225 (SKTEEEPGDK) shows a compositional bias: basic and acidic residues. NAD(+) is bound at residue 277 to 291 (GPRYCPSIEDKVVRF). Residue Gln374 participates in FAD binding.

This sequence belongs to the MnmG family. In terms of assembly, homodimer. Heterotetramer of two MnmE and two MnmG subunits. The cofactor is FAD.

The protein resides in the cytoplasm. Its function is as follows. NAD-binding protein involved in the addition of a carboxymethylaminomethyl (cmnm) group at the wobble position (U34) of certain tRNAs, forming tRNA-cmnm(5)s(2)U34. The chain is tRNA uridine 5-carboxymethylaminomethyl modification enzyme MnmG from Lactobacillus acidophilus (strain ATCC 700396 / NCK56 / N2 / NCFM).